Reading from the N-terminus, the 218-residue chain is Ribonuclease HII (218 aa).

In terms of domain architecture, RNase H type-2 spans 24–218 (ESIAGVDEVG…KLFAVNGSLT (195 aa)). Residues aspartate 30, glutamate 31, and aspartate 126 each contribute to the a divalent metal cation site.

Belongs to the RNase HII family. It depends on Mn(2+) as a cofactor. The cofactor is Mg(2+).

It is found in the cytoplasm. It carries out the reaction Endonucleolytic cleavage to 5'-phosphomonoester.. Its function is as follows. Endonuclease that specifically degrades the RNA of RNA-DNA hybrids. This Prochlorococcus marinus (strain MIT 9313) protein is Ribonuclease HII.